The sequence spans 727 residues: ABC transporter G family member 6 (727 aa).

Residues 68–333 enclose the ABC transporter domain; it reads LSFTDLTYSV…FAEFGHPIPE (266 aa). 126–133 is a binding site for ATP; sequence GASGSGKS. The ABC transmembrane type-2 domain maps to 421 to 631; the sequence is VELAVLAKRS…PYEAVLLNEF (211 aa). A run of 6 helical transmembrane segments spans residues 440-460, 475-495, 517-537, 560-580, 581-601, and 700-720; these read LFGI…TMFW, CFAF…PVFL, LSHS…FAAI, ASFW…PHVM, LGYT…GFFI, and LWVT…SLLL.

The protein belongs to the ABC transporter superfamily. ABCG family. Eye pigment precursor importer (TC 3.A.1.204) subfamily.

It is found in the membrane. This chain is ABC transporter G family member 6 (ABCG6), found in Arabidopsis thaliana (Mouse-ear cress).